A 279-amino-acid polypeptide reads, in one-letter code: Inorganic pyrophosphatase 2 (279 aa).

Asp12 acts as the Nucleophile in catalysis. Mg(2+) contacts are provided by Asp12 and Asp14. Catalysis depends on Asp14, which acts as the Proton donor. Asp23 and Asp98 together coordinate substrate. Residue Asp182 coordinates Mg(2+).

Belongs to the HAD-like hydrolase superfamily. As to quaternary structure, tetramer. Requires Mg(2+) as cofactor.

The catalysed reaction is diphosphate + H2O = 2 phosphate + H(+). Catalyzes the specific cleavage of pyrophosphate. This chain is Inorganic pyrophosphatase 2, found in Arabidopsis thaliana (Mouse-ear cress).